Reading from the N-terminus, the 43-residue chain is Protein PsbN (43 aa).

Residues 5–27 form a helical membrane-spanning segment; the sequence is TLVAIFISCLLVSFTGYAPYTAS.

It belongs to the PsbN family.

It is found in the plastid. Its subcellular location is the chloroplast thylakoid membrane. In terms of biological role, may play a role in photosystem I and II biogenesis. The protein is Protein PsbN of Anthoceros angustus (Hornwort).